The following is a 408-amino-acid chain: MSLSVTRENFDEWMVPVYIPAPFIPVRGEGSRLWDQQGKEYIDFAGGIAVNALGHAHPALREALNEQANRFWHTGNGYTNEPALRLAKKLIDATFAERVFFCNSGAEANEAALKLARKYAHDRVGNHKSGIVAFKNAFHGRTLFTVSAGGQPTYSQDFAPLPPDIRHAAYNDLNSASALIDDNTCAVIVEPVQGEGGVIPATKAFLQGLRELCDRHQALLIFDEVQTGVGRTGELYAYMHYGVTPDILTTAKALGGGFPIGAMLTTQDYASVMTPGTHGTTYGGNPLATAVAGKVLDIINTPEMQNGVRQRHDAFIERLNTLNVRFGMFSEIRGLGLLLGCVLQTKFAGKAKLIAQEAAKAGVMVLIAGGDVVRFAPALNVSDEEIATGLDRFALACERLQAGGASCG.

Lys-252 is modified (N6-(pyridoxal phosphate)lysine).

It belongs to the class-III pyridoxal-phosphate-dependent aminotransferase family. AstC subfamily. Requires pyridoxal 5'-phosphate as cofactor.

It carries out the reaction N(2)-succinyl-L-ornithine + 2-oxoglutarate = N-succinyl-L-glutamate 5-semialdehyde + L-glutamate. It functions in the pathway amino-acid degradation; L-arginine degradation via AST pathway; L-glutamate and succinate from L-arginine: step 3/5. Functionally, catalyzes the transamination of N(2)-succinylornithine and alpha-ketoglutarate into N(2)-succinylglutamate semialdehyde and glutamate. Can also act as an acetylornithine aminotransferase. This is Succinylornithine transaminase from Salmonella agona (strain SL483).